The primary structure comprises 301 residues: Heme A synthase (301 aa).

The Cytoplasmic portion of the chain corresponds to Met1 to Arg7. The chain crosses the membrane as a helical span at residues Leu8–Asn28. Residues Thr29–Val56 lie on the Extracellular side of the membrane. A disulfide bond links Cys35 and Cys42. A helical transmembrane segment spans residues Ile57–Ile77. Glu58 is an active-site residue. His61 serves as a coordination point for heme o. Over Trp78–Leu92 the chain is Cytoplasmic. A helical transmembrane segment spans residues Ala93–Phe113. The Extracellular portion of the chain corresponds to Gly114–Asp117. A helical transmembrane segment spans residues Leu118–Thr138. His123 is a binding site for heme o. Over Arg139–Tyr159 the chain is Cytoplasmic. A helical transmembrane segment spans residues Lys160–Val180. The Extracellular segment spans residues Lys181 to Arg215. A disulfide bridge links Cys189 with Cys195. His214 is a heme b binding site. Residues Ser216 to Phe236 form a helical membrane-spanning segment. At Arg237–Arg240 the chain is on the cytoplasmic side. A helical transmembrane segment spans residues Val241–Val261. At Ala262–Gly274 the chain is on the extracellular side. The chain crosses the membrane as a helical span at residues Ile275–Val295. His277 contributes to the heme b binding site. Topologically, residues Thr296 to Lys301 are cytoplasmic.

The protein belongs to the COX15/CtaA family. Type 1 subfamily. Interacts with CtaB. Heme b serves as cofactor.

It is found in the cell membrane. The enzyme catalyses Fe(II)-heme o + 2 A + H2O = Fe(II)-heme a + 2 AH2. The protein operates within porphyrin-containing compound metabolism; heme A biosynthesis; heme A from heme O: step 1/1. Catalyzes the conversion of heme O to heme A by two successive hydroxylations of the methyl group at C8. The first hydroxylation forms heme I, the second hydroxylation results in an unstable dihydroxymethyl group, which spontaneously dehydrates, resulting in the formyl group of heme A. This Shouchella clausii (strain KSM-K16) (Alkalihalobacillus clausii) protein is Heme A synthase.